Here is a 210-residue protein sequence, read N- to C-terminus: Large ribosomal subunit protein uL4 (210 aa).

Residues 46 to 89 form a disordered region; sequence QGTASTLTRSEVRGGGRKPYKQKGTGRARQGSIRTPLRPGGGII. The span at 60–71 shows a compositional bias: basic residues; that stretch reads GGRKPYKQKGTG.

Belongs to the universal ribosomal protein uL4 family. In terms of assembly, part of the 50S ribosomal subunit.

Functionally, one of the primary rRNA binding proteins, this protein initially binds near the 5'-end of the 23S rRNA. It is important during the early stages of 50S assembly. It makes multiple contacts with different domains of the 23S rRNA in the assembled 50S subunit and ribosome. Its function is as follows. Forms part of the polypeptide exit tunnel. This Prochlorococcus marinus (strain MIT 9215) protein is Large ribosomal subunit protein uL4.